A 353-amino-acid polypeptide reads, in one-letter code: Serine/threonine-protein phosphatase 2A activator 1 (353 aa).

The segment at 331–353 (ANNATTKMPPPLSTSTSRFIHRR) is disordered. The span at 343 to 353 (STSTSRFIHRR) shows a compositional bias: polar residues.

This sequence belongs to the PTPA-type PPIase family.

It is found in the cytoplasm. It localises to the nucleus. It carries out the reaction [protein]-peptidylproline (omega=180) = [protein]-peptidylproline (omega=0). Its function is as follows. PPIases accelerate the folding of proteins. It catalyzes the cis-trans isomerization of proline imidic peptide bonds in oligopeptides. Acts as a regulatory subunit for PP2A-like phosphatases modulating their activity or substrate specificity, probably by inducing a conformational change in the catalytic subunit, a direct target of the PPIase. Can reactivate inactive phosphatase PP2A-phosphatase methylesterase complexes (PP2Ai) in presence of ATP and Mg(2+) by dissociating the inactive form from the complex. The polypeptide is Serine/threonine-protein phosphatase 2A activator 1 (RRD1) (Kluyveromyces lactis (strain ATCC 8585 / CBS 2359 / DSM 70799 / NBRC 1267 / NRRL Y-1140 / WM37) (Yeast)).